The chain runs to 355 residues: 3-dehydroquinate synthase (355 aa).

NAD(+) is bound by residues 106–110 (GVVGD), 130–131 (TS), Lys143, and Lys152. The Zn(2+) site is built by Glu185, His246, and His262.

It belongs to the sugar phosphate cyclases superfamily. Dehydroquinate synthase family. Co(2+) serves as cofactor. It depends on Zn(2+) as a cofactor. Requires NAD(+) as cofactor.

It is found in the cytoplasm. It catalyses the reaction 7-phospho-2-dehydro-3-deoxy-D-arabino-heptonate = 3-dehydroquinate + phosphate. It functions in the pathway metabolic intermediate biosynthesis; chorismate biosynthesis; chorismate from D-erythrose 4-phosphate and phosphoenolpyruvate: step 2/7. In terms of biological role, catalyzes the conversion of 3-deoxy-D-arabino-heptulosonate 7-phosphate (DAHP) to dehydroquinate (DHQ). The sequence is that of 3-dehydroquinate synthase from Latilactobacillus sakei subsp. sakei (strain 23K) (Lactobacillus sakei subsp. sakei).